The primary structure comprises 175 residues: ATP synthase subunit b (175 aa).

Residues 19 to 35 form a helical membrane-spanning segment; it reads GLIFWTTVTFLIVLFIL.

The protein belongs to the ATPase B chain family. F-type ATPases have 2 components, F(1) - the catalytic core - and F(0) - the membrane proton channel. F(1) has five subunits: alpha(3), beta(3), gamma(1), delta(1), epsilon(1). F(0) has four main subunits: a(1), b(2) and c(10-14). The alpha and beta chains form an alternating ring which encloses part of the gamma chain. F(1) is attached to F(0) by a central stalk formed by the gamma and epsilon chains, while a peripheral stalk is formed by the delta and b chains.

It localises to the cell inner membrane. In terms of biological role, f(1)F(0) ATP synthase produces ATP from ADP in the presence of a proton or sodium gradient. F-type ATPases consist of two structural domains, F(1) containing the extramembraneous catalytic core and F(0) containing the membrane proton channel, linked together by a central stalk and a peripheral stalk. During catalysis, ATP synthesis in the catalytic domain of F(1) is coupled via a rotary mechanism of the central stalk subunits to proton translocation. Functionally, component of the F(0) channel, it forms part of the peripheral stalk, linking F(1) to F(0). The protein is ATP synthase subunit b of Chlorobium phaeobacteroides (strain BS1).